The chain runs to 1129 residues: Regulator of nonsense transcripts 1 (1129 aa).

The segment at 1–415 (MSVEAYGPSS…LRSSVGAPVE (415 aa)) is sufficient for interaction with RENT2. A phosphoserine mark is found at Ser10 and Ser31. Residues 39–70 (TLPSQTQTPPGGPGGPGGGGAGGPGGAGAGAA) are disordered. Over residues 52–69 (GGPGGGGAGGPGGAGAGA) the composition is skewed to gly residues. In terms of domain architecture, Upf1 CH-rich spans 115-272 (TKDLPIHACS…NKLEELWKEN (158 aa)). Residues Cys123, Cys126, Cys137, Ser140, Cys145, His155, His159, Cys165, Cys183, Cys186, Cys209, and Cys213 each coordinate Zn(2+). A C3H region spans residues 123-155 (CSYCGIHDPACVVYCNTSKKWFCNGRGNTSGSH). The segment at 137–165 (CNTSKKWFCNGRGNTSGSHIVNHLVRAKC) is CC/SHH/C. The tract at residues 183 to 213 (CYNCGCRNVFLLGFIPAKADSVVVLLCRQPC) is C4. Residues Gln486 and 506–510 (GTGKT) each bind ATP. Phosphoserine is present on Ser565. Gln676, Tyr713, and Glu844 together coordinate ATP. Ser956 bears the Phosphoserine mark. 2 disordered regions span residues 1009–1058 (FGQA…VASQ) and 1073–1096 (SQPS…YLGD). Arg1019 is subject to Omega-N-methylarginine. The segment covering 1025–1034 (KTGRGGRQKN) has biased composition (basic residues). Residues 1041–1058 (PSQTNLPNSQASQDVASQ) are compositionally biased toward polar residues. The span at 1073–1086 (SQPSQMSQPGLSQP) shows a compositional bias: low complexity. Ser1089, Ser1107, Ser1110, and Ser1127 each carry phosphoserine. Short sequence motifs ([ST]-Q motif) lie at residues 1089–1090 (SQ) and 1107–1108 (SQ). The segment at 1110–1129 (STYQGERAYQHGGVTGLSQY) is disordered.

It belongs to the DNA2/NAM7 helicase family. In terms of assembly, found in a post-splicing messenger ribonucleoprotein (mRNP) complex. Associates with the exon junction complex (EJC). Associates with the SGM1C complex; is phosphorylated by the complex kinase component SGM1. Part of a complex composed of SMG1, DHX34 and UPF1; within the complex DHX34 acts as a scaffolding protein to facilitate SMG1 phosphorylation of UPF1. Interacts with UPF2. Interacts with UPF3A and UPF3B. Interacts with EST1A. Interacts with SLBP. Interacts (when hyperphosphorylated) with PNRC2. Interacts with AGO1 and AGO2. Interacts with GSPT2. Interacts with isoform 1 and isoform 5 of ADAR/ADAR1. Interacts with SMG7. Interacts with ZC3H12A; this interaction occurs in a mRNA translationally active- and termination-dependent manner and is essential for ZC3H12A-mediated degradation of target mRNAs. Interacts with CPSF6. Interacts with MOV10; the interaction is direct and RNA-dependent. Interacts with SHFL; the interaction increases in the presence of RNA. Interacts with UPF2 and DDX4; interactions are mediated by TDRD6. Interacts with DHX34 and PABPC1/PABP1; the interactions are RNA-independent. Interacts with RBM46. (Microbial infection) Interacts with human T-cell leukemia virus 1/HTLV-1 protein Tax; this interaction inhibits the host nonsense-mediated mRNA decay (NMD). In terms of processing, phosphorylated by SMG1; required for formation of mRNA surveillance complexes. Ubiquitous.

It localises to the cytoplasm. The protein resides in the P-body. The protein localises to the nucleus. Its subcellular location is the perinuclear region. The enzyme catalyses ATP + H2O = ADP + phosphate + H(+). RNA-dependent helicase required for nonsense-mediated decay (NMD) of aberrant mRNAs containing premature stop codons and modulates the expression level of normal mRNAs. Is recruited to mRNAs upon translation termination and undergoes a cycle of phosphorylation and dephosphorylation; its phosphorylation appears to be a key step in NMD. Recruited by release factors to stalled ribosomes together with the SMG1C protein kinase complex to form the transient SURF (SMG1-UPF1-eRF1-eRF3) complex. In EJC-dependent NMD, the SURF complex associates with the exon junction complex (EJC) (located 50-55 or more nucleotides downstream from the termination codon) through UPF2 and allows the formation of an UPF1-UPF2-UPF3 surveillance complex which is believed to activate NMD. Phosphorylated UPF1 is recognized by EST1B/SMG5, SMG6 and SMG7 which are thought to provide a link to the mRNA degradation machinery involving exonucleolytic and endonucleolytic pathways, and to serve as adapters to protein phosphatase 2A (PP2A), thereby triggering UPF1 dephosphorylation and allowing the recycling of NMD factors. UPF1 can also activate NMD without UPF2 or UPF3, and in the absence of the NMD-enhancing downstream EJC indicative for alternative NMD pathways. Plays a role in replication-dependent histone mRNA degradation at the end of phase S; the function is independent of UPF2. For the recognition of premature termination codons (PTC) and initiation of NMD a competitive interaction between UPF1 and PABPC1 with the ribosome-bound release factors is proposed. The ATPase activity of UPF1 is required for disassembly of mRNPs undergoing NMD. Together with UPF2 and dependent on TDRD6, mediates the degradation of mRNA harboring long 3'UTR by inducing the NMD machinery. Also capable of unwinding double-stranded DNA and translocating on single-stranded DNA. This is Regulator of nonsense transcripts 1 from Homo sapiens (Human).